Here is a 424-residue protein sequence, read N- to C-terminus: UPF0597 protein Shew185_3080 (424 aa).

It belongs to the UPF0597 family.

This chain is UPF0597 protein Shew185_3080, found in Shewanella baltica (strain OS185).